Consider the following 250-residue polypeptide: MSILSKIQRTQPLILNLANFVTPQRVADVISFIGASPLMTSEIAELESLVEISDAVVVNIGTISESTYPLFLEACRLANQKAKPLILDPVAVNIPFRASIVKRLSQEVKFNIIRGNSAEIAWFADKKSLNKGIDALESNIDNEHARLAAKKTGTVIIETGKVDIISNGHEEMYVDTDSPLFKINVGCGDMLTAVVGTFAAVSDDLFTAAYEATKFFGEAGMIATKQVQNLPGNFVNSLLDTLYQTTHEIK.

Substrate is bound at residue M39. Residues R114 and T159 each contribute to the ATP site. A substrate-binding site is contributed by G186.

It belongs to the Thz kinase family. Mg(2+) serves as cofactor.

The enzyme catalyses 5-(2-hydroxyethyl)-4-methylthiazole + ATP = 4-methyl-5-(2-phosphooxyethyl)-thiazole + ADP + H(+). Its pathway is cofactor biosynthesis; thiamine diphosphate biosynthesis; 4-methyl-5-(2-phosphoethyl)-thiazole from 5-(2-hydroxyethyl)-4-methylthiazole: step 1/1. In terms of biological role, catalyzes the phosphorylation of the hydroxyl group of 4-methyl-5-beta-hydroxyethylthiazole (THZ). This is Hydroxyethylthiazole kinase from Lactococcus lactis subsp. cremoris (strain MG1363).